A 502-amino-acid chain; its full sequence is ATP synthase subunit alpha (502 aa).

169-176 (GDRQTGKT) lines the ATP pocket.

This sequence belongs to the ATPase alpha/beta chains family. F-type ATPases have 2 components, CF(1) - the catalytic core - and CF(0) - the membrane proton channel. CF(1) has five subunits: alpha(3), beta(3), gamma(1), delta(1), epsilon(1). CF(0) has three main subunits: a(1), b(2) and c(9-12). The alpha and beta chains form an alternating ring which encloses part of the gamma chain. CF(1) is attached to CF(0) by a central stalk formed by the gamma and epsilon chains, while a peripheral stalk is formed by the delta and b chains.

The protein resides in the cell membrane. It carries out the reaction ATP + H2O + 4 H(+)(in) = ADP + phosphate + 5 H(+)(out). Its function is as follows. Produces ATP from ADP in the presence of a proton gradient across the membrane. The alpha chain is a regulatory subunit. The sequence is that of ATP synthase subunit alpha from Priestia megaterium (strain ATCC 12872 / QMB1551) (Bacillus megaterium).